We begin with the raw amino-acid sequence, 89 residues long: Small ribosomal subunit protein uS15 (89 aa).

It belongs to the universal ribosomal protein uS15 family. As to quaternary structure, part of the 30S ribosomal subunit. Forms a bridge to the 50S subunit in the 70S ribosome, contacting the 23S rRNA.

In terms of biological role, one of the primary rRNA binding proteins, it binds directly to 16S rRNA where it helps nucleate assembly of the platform of the 30S subunit by binding and bridging several RNA helices of the 16S rRNA. Functionally, forms an intersubunit bridge (bridge B4) with the 23S rRNA of the 50S subunit in the ribosome. This is Small ribosomal subunit protein uS15 from Cereibacter sphaeroides (strain ATCC 17025 / ATH 2.4.3) (Rhodobacter sphaeroides).